Consider the following 457-residue polypeptide: Siroheme synthase (457 aa).

The segment at methionine 1–threonine 204 is precorrin-2 dehydrogenase /sirohydrochlorin ferrochelatase. Residues aspartate 22 to valine 23 and leucine 43 to alanine 44 each bind NAD(+). A Phosphoserine modification is found at serine 128. The uroporphyrinogen-III C-methyltransferase stretch occupies residues glycine 216 to histidine 457. Proline 225 contributes to the S-adenosyl-L-methionine binding site. Residue aspartate 248 is the Proton acceptor of the active site. The active-site Proton donor is the lysine 270. S-adenosyl-L-methionine-binding positions include glycine 301–aspartate 303, isoleucine 306, threonine 331–alanine 332, methionine 382, and glycine 411.

It in the N-terminal section; belongs to the precorrin-2 dehydrogenase / sirohydrochlorin ferrochelatase family. This sequence in the C-terminal section; belongs to the precorrin methyltransferase family.

The catalysed reaction is uroporphyrinogen III + 2 S-adenosyl-L-methionine = precorrin-2 + 2 S-adenosyl-L-homocysteine + H(+). The enzyme catalyses precorrin-2 + NAD(+) = sirohydrochlorin + NADH + 2 H(+). It catalyses the reaction siroheme + 2 H(+) = sirohydrochlorin + Fe(2+). Its pathway is cofactor biosynthesis; adenosylcobalamin biosynthesis; precorrin-2 from uroporphyrinogen III: step 1/1. The protein operates within cofactor biosynthesis; adenosylcobalamin biosynthesis; sirohydrochlorin from precorrin-2: step 1/1. It functions in the pathway porphyrin-containing compound metabolism; siroheme biosynthesis; precorrin-2 from uroporphyrinogen III: step 1/1. It participates in porphyrin-containing compound metabolism; siroheme biosynthesis; siroheme from sirohydrochlorin: step 1/1. Its pathway is porphyrin-containing compound metabolism; siroheme biosynthesis; sirohydrochlorin from precorrin-2: step 1/1. Functionally, multifunctional enzyme that catalyzes the SAM-dependent methylations of uroporphyrinogen III at position C-2 and C-7 to form precorrin-2 via precorrin-1. Then it catalyzes the NAD-dependent ring dehydrogenation of precorrin-2 to yield sirohydrochlorin. Finally, it catalyzes the ferrochelation of sirohydrochlorin to yield siroheme. The chain is Siroheme synthase from Escherichia coli O17:K52:H18 (strain UMN026 / ExPEC).